Here is a 352-residue protein sequence, read N- to C-terminus: Anthranilate phosphoribosyltransferase (352 aa).

5-phospho-alpha-D-ribose 1-diphosphate contacts are provided by residues glycine 83, 86–87, threonine 91, 93–96, 111–119, and alanine 123; these read GD, NIST, and KHGGRSVSS. Residue glycine 83 coordinates anthranilate. Serine 95 contacts Mg(2+). Position 169 (arginine 169) interacts with anthranilate. Mg(2+)-binding residues include aspartate 228 and glutamate 229.

The protein belongs to the anthranilate phosphoribosyltransferase family. Homodimer. Mg(2+) serves as cofactor.

It catalyses the reaction N-(5-phospho-beta-D-ribosyl)anthranilate + diphosphate = 5-phospho-alpha-D-ribose 1-diphosphate + anthranilate. The protein operates within amino-acid biosynthesis; L-tryptophan biosynthesis; L-tryptophan from chorismate: step 2/5. Catalyzes the transfer of the phosphoribosyl group of 5-phosphorylribose-1-pyrophosphate (PRPP) to anthranilate to yield N-(5'-phosphoribosyl)-anthranilate (PRA). The chain is Anthranilate phosphoribosyltransferase from Neisseria meningitidis serogroup A / serotype 4A (strain DSM 15465 / Z2491).